The chain runs to 452 residues: FAD transporter (452 aa).

The next 12 helical transmembrane spans lie at 21–41 (LPNL…TFFI), 49–69 (LAAI…AIGV), 96–116 (ALLL…IFIE), 131–151 (LIHD…LLMV), 167–187 (MIMT…IFGI), 199–219 (AIAT…LLII), 248–270 (AALM…AHID), 283–303 (LESV…PFIA), 324–344 (FILV…QPLA), 357–377 (LSFY…VIIF), 392–412 (VINL…GSYI), and 417–437 (GLLL…YYLA).

Belongs to the multi antimicrobial extrusion (MATE) (TC 2.A.66.1) family.

It localises to the cell inner membrane. Functionally, flavin adenine dinucleotide (FAD) transporter that facilitates export of flavin electron shuttles. This Shewanella oneidensis (strain ATCC 700550 / JCM 31522 / CIP 106686 / LMG 19005 / NCIMB 14063 / MR-1) protein is FAD transporter.